Consider the following 97-residue polypeptide: Small ribosomal subunit protein eS25 (97 aa).

The segment at 1-24 (MAPAASGAKKQKKKWSKGKVKDKA) is disordered. Residues 9–18 (KKQKKKWSKG) show a composition bias toward basic residues.

This sequence belongs to the eukaryotic ribosomal protein eS25 family. Component of the small ribosomal subunit (SSU). Mature N.crassa ribosomes consist of a small (40S) and a large (60S) subunit. The 40S small subunit contains 1 molecule of ribosomal RNA (18S rRNA) and at least 32 different proteins. The large 60S subunit contains 3 rRNA molecules (26S, 5.8S and 5S rRNA) and at least 42 different proteins.

Its subcellular location is the cytoplasm. In terms of biological role, component of the ribosome, a large ribonucleoprotein complex responsible for the synthesis of proteins in the cell. The small ribosomal subunit (SSU) binds messenger RNAs (mRNAs) and translates the encoded message by selecting cognate aminoacyl-transfer RNA (tRNA) molecules. The large subunit (LSU) contains the ribosomal catalytic site termed the peptidyl transferase center (PTC), which catalyzes the formation of peptide bonds, thereby polymerizing the amino acids delivered by tRNAs into a polypeptide chain. The nascent polypeptides leave the ribosome through a tunnel in the LSU and interact with protein factors that function in enzymatic processing, targeting, and the membrane insertion of nascent chains at the exit of the ribosomal tunnel. The chain is Small ribosomal subunit protein eS25 (rps-25) from Neurospora crassa (strain ATCC 24698 / 74-OR23-1A / CBS 708.71 / DSM 1257 / FGSC 987).